We begin with the raw amino-acid sequence, 142 residues long: Large ribosomal subunit protein uL13 (142 aa).

Belongs to the universal ribosomal protein uL13 family. In terms of assembly, part of the 50S ribosomal subunit.

Functionally, this protein is one of the early assembly proteins of the 50S ribosomal subunit, although it is not seen to bind rRNA by itself. It is important during the early stages of 50S assembly. The sequence is that of Large ribosomal subunit protein uL13 from Actinobacillus pleuropneumoniae serotype 5b (strain L20).